Consider the following 430-residue polypeptide: Glutamyl-tRNA reductase (430 aa).

Substrate-binding positions include 50-53 (TCNR), S108, 113-115 (EPQ), and Q119. The active-site Nucleophile is the C51. 188–193 (GAGEMA) is a binding site for NADP(+).

Belongs to the glutamyl-tRNA reductase family. Homodimer.

It carries out the reaction (S)-4-amino-5-oxopentanoate + tRNA(Glu) + NADP(+) = L-glutamyl-tRNA(Glu) + NADPH + H(+). The protein operates within porphyrin-containing compound metabolism; protoporphyrin-IX biosynthesis; 5-aminolevulinate from L-glutamyl-tRNA(Glu): step 1/2. Its function is as follows. Catalyzes the NADPH-dependent reduction of glutamyl-tRNA(Glu) to glutamate 1-semialdehyde (GSA). In Lawsonia intracellularis (strain PHE/MN1-00), this protein is Glutamyl-tRNA reductase.